Reading from the N-terminus, the 278-residue chain is Ribosomal protein L11 methyltransferase (278 aa).

4 residues coordinate S-adenosyl-L-methionine: Thr-131, Gly-152, Asp-173, and Asn-214.

It belongs to the methyltransferase superfamily. PrmA family.

The protein resides in the cytoplasm. It catalyses the reaction L-lysyl-[protein] + 3 S-adenosyl-L-methionine = N(6),N(6),N(6)-trimethyl-L-lysyl-[protein] + 3 S-adenosyl-L-homocysteine + 3 H(+). Methylates ribosomal protein L11. In Campylobacter lari (strain RM2100 / D67 / ATCC BAA-1060), this protein is Ribosomal protein L11 methyltransferase.